The primary structure comprises 818 residues: Glycerol-3-phosphate acyltransferase (818 aa).

The HXXXXD motif signature appears at 305 to 310; the sequence is CHRSHM.

The protein belongs to the GPAT/DAPAT family.

The protein resides in the cell inner membrane. The catalysed reaction is sn-glycerol 3-phosphate + an acyl-CoA = a 1-acyl-sn-glycero-3-phosphate + CoA. The protein operates within phospholipid metabolism; CDP-diacylglycerol biosynthesis; CDP-diacylglycerol from sn-glycerol 3-phosphate: step 1/3. This Edwardsiella ictaluri (strain 93-146) protein is Glycerol-3-phosphate acyltransferase.